The following is a 498-amino-acid chain: Glycerol kinase (498 aa).

T11 serves as a coordination point for ADP. T11, S12, and S13 together coordinate ATP. Residue T11 participates in sn-glycerol 3-phosphate binding. Residue R15 participates in ADP binding. Sn-glycerol 3-phosphate contacts are provided by R81, E82, Y133, and D242. 5 residues coordinate glycerol: R81, E82, Y133, D242, and Q243. Residues T264 and G307 each coordinate ADP. 4 residues coordinate ATP: T264, G307, Q311, and G408. ADP-binding residues include G408 and N412.

This sequence belongs to the FGGY kinase family.

It carries out the reaction glycerol + ATP = sn-glycerol 3-phosphate + ADP + H(+). It participates in polyol metabolism; glycerol degradation via glycerol kinase pathway; sn-glycerol 3-phosphate from glycerol: step 1/1. With respect to regulation, inhibited by fructose 1,6-bisphosphate (FBP). Its function is as follows. Key enzyme in the regulation of glycerol uptake and metabolism. Catalyzes the phosphorylation of glycerol to yield sn-glycerol 3-phosphate. This Ralstonia pickettii (strain 12J) protein is Glycerol kinase.